A 269-amino-acid chain; its full sequence is 3-methyl-2-oxobutanoate hydroxymethyltransferase (269 aa).

Residues aspartate 50 and aspartate 89 each contribute to the Mg(2+) site. Residues 50–51 (DS), aspartate 89, and lysine 119 contribute to the 3-methyl-2-oxobutanoate site. A Mg(2+)-binding site is contributed by glutamate 121. Residue glutamate 187 is the Proton acceptor of the active site.

Belongs to the PanB family. As to quaternary structure, homodecamer; pentamer of dimers. Requires Mg(2+) as cofactor.

It is found in the cytoplasm. It carries out the reaction 3-methyl-2-oxobutanoate + (6R)-5,10-methylene-5,6,7,8-tetrahydrofolate + H2O = 2-dehydropantoate + (6S)-5,6,7,8-tetrahydrofolate. The protein operates within cofactor biosynthesis; (R)-pantothenate biosynthesis; (R)-pantoate from 3-methyl-2-oxobutanoate: step 1/2. Its function is as follows. Catalyzes the reversible reaction in which hydroxymethyl group from 5,10-methylenetetrahydrofolate is transferred onto alpha-ketoisovalerate to form ketopantoate. The protein is 3-methyl-2-oxobutanoate hydroxymethyltransferase of Corynebacterium efficiens (strain DSM 44549 / YS-314 / AJ 12310 / JCM 11189 / NBRC 100395).